A 219-amino-acid chain; its full sequence is Endonuclease V (219 aa).

Mg(2+) contacts are provided by Asp-41 and Asp-107.

It belongs to the endonuclease V family. Mg(2+) is required as a cofactor.

It localises to the cytoplasm. The enzyme catalyses Endonucleolytic cleavage at apurinic or apyrimidinic sites to products with a 5'-phosphate.. In terms of biological role, DNA repair enzyme involved in the repair of deaminated bases. Selectively cleaves double-stranded DNA at the second phosphodiester bond 3' to a deoxyinosine leaving behind the intact lesion on the nicked DNA. The polypeptide is Endonuclease V (Desulfurococcus amylolyticus (strain DSM 18924 / JCM 16383 / VKM B-2413 / 1221n) (Desulfurococcus kamchatkensis)).